Reading from the N-terminus, the 121-residue chain is LFAPNLLLDRNQGKCVEGMVESFDMLLATSSRFRMMNLQGEEFVCLKSIILLNSGVYTFLSSTLKSLEEKDHIHRVLDKITDTLIHLMAKAGLTLQQQHRRLAQLLLILSHIRHMSNKGME.

Residues 1 to 121 (LFAPNLLLDR…IRHMSNKGME (121 aa)) enclose the NR LBD domain. Cys45 carries the S-palmitoyl cysteine lipid modification.

This sequence belongs to the nuclear hormone receptor family. NR3 subfamily. As to quaternary structure, binds DNA as a homodimer. Can form a heterodimer with ESR2. Interacts with coactivator NCOA5. Interacts with NCOA7; the interaction is ligand-inducible. Interacts with AKAP13, CUEDC2, HEXIM1, KDM5A, MAP1S, PELP1, SMARD1, and UBE1C. Interacts with MUC1; the interaction is stimulated by 7 beta-estradiol (E2) and enhances ERS1-mediated transcription. Interacts with DNTTIP2, and UIMC1. Interacts with KMT2D/MLL2. Interacts with ATAD2; the interaction is enhanced by estradiol. Interacts with KIF18A and LDB1. Interacts with RLIM (via its C-terminus). Interacts with MACROD1. Interacts with SH2D4A and PLCG. Interacts with SH2D4A; the interaction blocks binding to PLCG and inhibits estrogen-induced cell proliferation. Interacts with DYNLL1. Interacts with CCDC62; the interaction requires estradiol and appears to enhance the transcription of target genes. Interacts with NR2C1; the interaction prevents homodimerization of ESR1 and suppresses its transcriptional activity and cell growth. Interacts with DNAAF4. Interacts with PRMT2. Interacts with PI3KR1 or PIK3R2, SRC and PTK2/FAK1. Interacts with RBFOX2. Interacts with EP300; the interaction is estrogen-dependent and enhanced by CITED1. Interacts with CITED1; the interaction is estrogen-dependent. Interacts with FAM120B, FOXL2, PHB2 and SLC30A9. Interacts with coactivators NCOA3 and NCOA6. Interacts with STK3/MST2 only in the presence of SAV1 and vice-versa. Binds to CSNK1D. Interacts with NCOA2; NCOA2 can interact with ESR1 AF-1 and AF-2 domains simultaneously and mediate their transcriptional synergy. Interacts with DDX5. Interacts with NCOA1; the interaction seems to require a self-association of N-terminal and C-terminal regions. Interacts with ZNF366, DDX17, NFKB1, RELA, SP1 and SP3. Interacts with NRIP1. Interacts with GPER1; the interaction occurs in an estrogen-dependent manner. Interacts with CLOCK and the interaction is stimulated by estrogen. Interacts with TRIP4 (ufmylated); estrogen dependent. Interacts with LMTK3; the interaction phosphorylates ESR1 (in vitro) and protects it against proteasomal degradation. Interacts with CCAR2 (via N-terminus) in a ligand-independent manner. Interacts with ZFHX3. Interacts with SFR1 in a ligand-dependent and -independent manner. Interacts with DCAF13, LATS1 and DCAF1; regulates ESR1 ubiquitination and ubiquitin-mediated proteasomal degradation. Interacts (via DNA-binding domain) with POU4F2 (C-terminus); this interaction increases the estrogen receptor ESR1 transcriptional activity in a DNA- and ligand 17-beta-estradiol-independent manner. Interacts with ESRRB isoform 1. Interacts with UBE3A and WBP2. Interacts with GTF2B. Interacts with RBM39. In the absence of hormonal ligand, interacts with TACC1. Interacts with BAG1; the interaction is promoted in the absence of estradiol (17-beta-estradiol/E2). Interacts with and ubiquitinated by STUB1; the interaction is promoted in the absence of estradiol (17-beta-estradiol/E2). Interacts with NEDD8. In terms of processing, ubiquitinated; regulated by LATS1 via DCAF1 it leads to ESR1 proteasomal degradation. Deubiquitinated by OTUB1. Ubiquitinated by STUB1/CHIP; in the CA1 hippocampal region following loss of endogenous circulating estradiol (17-beta-estradiol/E2). Ubiquitinated by UBR5, leading to its degradation: UBR5 specifically recognizes and binds ligand-bound ESR1 when it is not associated with coactivators (NCOAs). In presence of NCOAs, the UBR5-degron is not accessible, preventing its ubiquitination and degradation. Palmitoylated at Cys-45 by ZDHHC7 and ZDHHC21. Palmitoylation is required for plasma membrane targeting and for rapid intracellular signaling via ERK and AKT kinases and cAMP generation, but not for signaling mediated by the nuclear hormone receptor. Post-translationally, phosphorylated by cyclin A/CDK2 and CK1. Phosphorylation probably enhances transcriptional activity. Dephosphorylation by PPP5C inhibits its transactivation activity. Phosphorylated by LMTK3 (in vitro). In terms of processing, dimethylated by PRMT1. Demethylated by JMJD6.

The protein resides in the nucleus. The protein localises to the cytoplasm. It localises to the golgi apparatus. Its subcellular location is the cell membrane. Nuclear hormone receptor. The steroid hormones and their receptors are involved in the regulation of eukaryotic gene expression and affect cellular proliferation and differentiation in target tissues. Ligand-dependent nuclear transactivation involves either direct homodimer binding to a palindromic estrogen response element (ERE) sequence or association with other DNA-binding transcription factors, such as AP-1/c-Jun, c-Fos, ATF-2, Sp1 and Sp3, to mediate ERE-independent signaling. Ligand binding induces a conformational change allowing subsequent or combinatorial association with multiprotein coactivator complexes through LXXLL motifs of their respective components. Mutual transrepression occurs between the estrogen receptor (ER) and NF-kappa-B in a cell-type specific manner. Decreases NF-kappa-B DNA-binding activity and inhibits NF-kappa-B-mediated transcription from the IL6 promoter and displace RELA/p65 and associated coregulators from the promoter. Recruited to the NF-kappa-B response element of the CCL2 and IL8 promoters and can displace CREBBP. Present with NF-kappa-B components RELA/p65 and NFKB1/p50 on ERE sequences. Can also act synergistically with NF-kappa-B to activate transcription involving respective recruitment adjacent response elements; the function involves CREBBP. Can activate the transcriptional activity of TFF1. Also mediates membrane-initiated estrogen signaling involving various kinase cascades. Essential for MTA1-mediated transcriptional regulation of BRCA1 and BCAS3. Maintains neuronal survival in response to ischemic reperfusion injury when in the presence of circulating estradiol (17-beta-estradiol/E2). The chain is Estrogen receptor (ESR1) from Macaca mulatta (Rhesus macaque).